Here is a 221-residue protein sequence, read N- to C-terminus: Translation initiation factor 6 (221 aa).

This sequence belongs to the eIF-6 family.

Binds to the 50S ribosomal subunit and prevents its association with the 30S ribosomal subunit to form the 70S initiation complex. This is Translation initiation factor 6 from Methanocella arvoryzae (strain DSM 22066 / NBRC 105507 / MRE50).